We begin with the raw amino-acid sequence, 284 residues long: Nucleotide-binding protein NMA0948 (284 aa).

8–15 (GLSGSGKS) provides a ligand contact to ATP. 58–61 (DVRS) contacts GTP.

This sequence belongs to the RapZ-like family.

Its function is as follows. Displays ATPase and GTPase activities. This chain is Nucleotide-binding protein NMA0948, found in Neisseria meningitidis serogroup A / serotype 4A (strain DSM 15465 / Z2491).